Here is a 61-residue protein sequence, read N- to C-terminus: Large ribosomal subunit protein eL24 (61 aa).

Residues Cys7, Cys10, Cys33, and Cys37 each contribute to the Zn(2+) site. The C4-type zinc finger occupies 7 to 37 (CSFCGHEIPPGTGLMYVRNDGTMLWFCSSKC).

It belongs to the eukaryotic ribosomal protein eL24 family. Part of the 50S ribosomal subunit. Forms a cluster with proteins L3 and L14. It depends on Zn(2+) as a cofactor.

Its function is as follows. Binds to the 23S rRNA. This is Large ribosomal subunit protein eL24 from Saccharolobus islandicus (strain M.16.27) (Sulfolobus islandicus).